A 247-amino-acid polypeptide reads, in one-letter code: 1-(5-phosphoribosyl)-5-[(5-phosphoribosylamino)methylideneamino] imidazole-4-carboxamide isomerase (247 aa).

Asp8 serves as the catalytic Proton acceptor. Asp130 functions as the Proton donor in the catalytic mechanism.

The protein belongs to the HisA/HisF family.

It localises to the cytoplasm. The catalysed reaction is 1-(5-phospho-beta-D-ribosyl)-5-[(5-phospho-beta-D-ribosylamino)methylideneamino]imidazole-4-carboxamide = 5-[(5-phospho-1-deoxy-D-ribulos-1-ylimino)methylamino]-1-(5-phospho-beta-D-ribosyl)imidazole-4-carboxamide. The protein operates within amino-acid biosynthesis; L-histidine biosynthesis; L-histidine from 5-phospho-alpha-D-ribose 1-diphosphate: step 4/9. The sequence is that of 1-(5-phosphoribosyl)-5-[(5-phosphoribosylamino)methylideneamino] imidazole-4-carboxamide isomerase from Leptospira biflexa serovar Patoc (strain Patoc 1 / Ames).